Consider the following 1481-residue polypeptide: Protein shortage in chiasmata 1 ortholog (1481 aa).

Disordered stretches follow at residues 479–498 (TDVH…EKEV) and 512–560 (KSKV…IQAS). The span at 513-531 (SKVEANPKNDQEPEARIMQ) shows a compositional bias: basic and acidic residues. Low complexity predominate over residues 543–560 (SSQVPSAESASSSQIQAS).

This sequence belongs to the XPF family. Highly divergent. As to quaternary structure, interacts with TEX11. Interacts with SPO16. In terms of tissue distribution, mainly expressed in adult testis.

It is found in the chromosome. In terms of biological role, ATPase required during meiosis for the formation of crossover recombination intermediates. Binds DNA: preferentially binds to single-stranded DNA and DNA branched structures. Does not show nuclease activity in vitro, but shows ATPase activity, which is stimulated by the presence of single-stranded DNA. Plays a key role in homologous recombination and crossing-over in meiotic prophase I in male and female germ cells. Required for proper synaptonemal complex assembly and homologous chromosome pairing. Required for recruitment of TEX11 and MSH4 to recombination intermediates. The polypeptide is Protein shortage in chiasmata 1 ortholog (Mus musculus (Mouse)).